Here is a 263-residue protein sequence, read N- to C-terminus: Retinoic acid early transcript 1E (263 aa).

A signal peptide spans 1 to 30; the sequence is MRRISLTSSPVRLLLFLLLLLIALEIMVGG. The tract at residues 31-116 is MHC class I alpha-1 like; down-regulates the cell surface expression of KLRK1; it reads HSLCFNFTIK…DIKPQIKTSD (86 aa). Residues 31 to 225 are Extracellular-facing; the sequence is HSLCFNFTIK…IHWSSSSLPD (195 aa). Residues asparagine 36, asparagine 154, and asparagine 212 are each glycosylated (N-linked (GlcNAc...) asparagine). The tract at residues 117 to 207 is MHC class I alpha-2 like; down-regulates the cell surface expression of KLRK1; that stretch reads PSTLQVEMFC…GHWEAMPEPT (91 aa). Cysteine 126 and cysteine 189 are disulfide-bonded. A helical transmembrane segment spans residues 226-248; that stretch reads RWIILGAFILLVLMGIVLICVWW. The Cytoplasmic segment spans residues 249–263; the sequence is QNGEWQAGLWPLRTS.

Belongs to the MHC class I family. As to quaternary structure, binds to KLRK1/NKG2D. In terms of assembly, (Microbial infection) Contrary to other family members, does not interact with CMV glycoprotein UL16. As to expression, predominantly expressed in the skin, but also expressed in testis and trachea. Up-regulated in tumor cells of different origins. Expression progressively decreased after treatment of tumor cells with retinoic acid.

Its subcellular location is the membrane. It localises to the secreted. Binds and activates the KLRK1/NKG2D receptor, mediating natural killer cell cytotoxicity. The sequence is that of Retinoic acid early transcript 1E from Homo sapiens (Human).